A 129-amino-acid polypeptide reads, in one-letter code: Azurin-2 (129 aa).

Residues 1–129 (AQCEATVESN…MMKGTLKLGS (129 aa)) form the Plastocyanin-like domain. Cysteines 3 and 26 form a disulfide. 4 residues coordinate Cu cation: histidine 46, cysteine 112, histidine 117, and methionine 121.

The protein resides in the periplasm. Functionally, transfers electrons from cytochrome c551 to cytochrome oxidase. The protein is Azurin-2 of Alcaligenes xylosoxydans xylosoxydans (Achromobacter xylosoxidans).